The following is a 1299-amino-acid chain: Cilia- and flagella-associated protein 251 (1299 aa).

The segment at 1–351 is disordered; the sequence is MSDTEENPLE…SQKPEDILAQ (351 aa). 3 stretches are compositionally biased toward acidic residues: residues 17-45, 91-162, and 176-189; these read EMEE…EEEE, EKEE…EEDA, and ESQE…EWVE. The span at 190–199 shows a compositional bias: basic and acidic residues; it reads KEEQREGEEV. The segment covering 212-228 has biased composition (acidic residues); that stretch reads EEEGWEEEKSGEEEKSE. Positions 229-257 are enriched in basic and acidic residues; the sequence is ESERSKERGGEEEGQEKEEAEHEGEREEG. A compositionally biased stretch (acidic residues) spans 269-280; the sequence is REEEEEEEDTET. 2 stretches are compositionally biased toward basic and acidic residues: residues 281-297 and 331-351; these read TETK…EKQN and NSMK…ILAQ. WD repeat units follow at residues 484–526, 534–574, 585–624, 643–678, 681–741, 745–785, 791–828, 838–874, 881–924, 935–975, 981–1027, 1033–1071, 1109–1149, and 1169–1209; these read PVHT…IWKW, ACTL…CWFE, VLTE…VWDI, PRKL…FYDH, SVVN…VYHM, GTKL…VWDF, LFSR…ILDA, PFKY…MVVV, WEYL…EYNL, LDVH…LFNA, RKTL…ILPV, KTCA…QWKI, YFYY…FYPS, and GKLI…GYTN.

It localises to the cytoplasm. Its subcellular location is the cytoskeleton. It is found in the cilium axoneme. The protein resides in the cell projection. The protein localises to the cilium. It localises to the flagellum. Its function is as follows. Involved in spermatozoa motility. May also regulate cilium motility through its role in the assembly of the axonemal radial spokes. This chain is Cilia- and flagella-associated protein 251, found in Mus musculus (Mouse).